Here is a 689-residue protein sequence, read N- to C-terminus: Dipeptidyl aminopeptidase BIII (689 aa).

Positions 1-26 (MRHPAFRLTLLASTVAFALAPQAAQA) are cleaved as a signal peptide. Catalysis depends on charge relay system residues Ser-506, Asp-593, and His-625.

The protein belongs to the peptidase S9C family. Monomer.

With respect to regulation, strongly inhibited by the serine protease inhibitor diisopropyl fluorophosphate (DFP), chymostatin, leupeptin, 0.5 mM ZnCl(2), 10 mM o-phenanthlorine and N-tosyl-L-phenyl-alanyl chloromethyl ketone (TPCK), but not by N-tosyl-L-lysyl chloromethyl ketone (TLCK). Activity is not affected significantly by iodoacetate (IAA), L-trans-epoxysuccinyl-leucylamido(4-guanido)butane (E64), pepstatin A and phenylmethanesulfonyl fluoride (PMSF). Activity is stimulated by addition of 0.5 mM CaCl(2), 10 mM EDTA and N-ethylmaleimide (NEM). In terms of biological role, exopeptidase that catalyzes the removal of dipeptide units (NH2-P2-P1- or -P1'-P2'-COOH) from the free amino or carboxy termini. Prefers substrates composed of bulky, hydrophobic amino acids at P1 and P1' positions. Has endopeptidase activity on N-terminally blocked peptide derivatives which contain aromatic amino acid residue at the P1 position. Exopeptidase activity is much higher than its endopeptidase activity. This is Dipeptidyl aminopeptidase BIII from Pseudoxanthomonas mexicana.